A 361-amino-acid chain; its full sequence is Ribosomal RNA large subunit methyltransferase M (361 aa).

S-adenosyl-L-methionine is bound by residues Ser-187, 220–223, Asp-239, Asp-259, and Asp-276; that span reads CPGG. Lys-305 serves as the catalytic Proton acceptor.

It belongs to the class I-like SAM-binding methyltransferase superfamily. RNA methyltransferase RlmE family. RlmM subfamily. Monomer.

It localises to the cytoplasm. The catalysed reaction is cytidine(2498) in 23S rRNA + S-adenosyl-L-methionine = 2'-O-methylcytidine(2498) in 23S rRNA + S-adenosyl-L-homocysteine + H(+). Catalyzes the 2'-O-methylation at nucleotide C2498 in 23S rRNA. The polypeptide is Ribosomal RNA large subunit methyltransferase M (Shewanella sp. (strain MR-7)).